Here is a 486-residue protein sequence, read N- to C-terminus: Ribulose bisphosphate carboxylase large chain 3 (486 aa).

Positions 125 and 175 each coordinate substrate. K177 (proton acceptor) is an active-site residue. K179 is a binding site for substrate. K203, D205, and E206 together coordinate Mg(2+). K203 carries the N6-carboxylysine modification. The Proton acceptor role is filled by H295. 3 residues coordinate substrate: R296, H328, and S380.

The protein belongs to the RuBisCO large chain family. Type I subfamily. In terms of assembly, heterohexadecamer of 8 large chains and 8 small chains. It depends on Mg(2+) as a cofactor.

It carries out the reaction 2 (2R)-3-phosphoglycerate + 2 H(+) = D-ribulose 1,5-bisphosphate + CO2 + H2O. The enzyme catalyses D-ribulose 1,5-bisphosphate + O2 = 2-phosphoglycolate + (2R)-3-phosphoglycerate + 2 H(+). In terms of biological role, ruBisCO catalyzes two reactions: the carboxylation of D-ribulose 1,5-bisphosphate, the primary event in carbon dioxide fixation, as well as the oxidative fragmentation of the pentose substrate. Both reactions occur simultaneously and in competition at the same active site. In Bradyrhizobium sp. (strain BTAi1 / ATCC BAA-1182), this protein is Ribulose bisphosphate carboxylase large chain 3.